The following is a 293-amino-acid chain: MRLVFGEKDTPYEEARVVVLPVPYDLSLSFLPGARRGPEAILLASRELEPFLLELGAAPEEVGIHAAEPVPWVAGMAEESHRLIREEALRHLRAGKWVVALGGDHSVTHPLVQAHREALGDFSLLHVDAHADLYPEWQGSVYSHASPFYRLLTEGFPLVQVGIRAMDRDSLRLARKKGVALFPAHRIHREGLPLDEILRALGKRVYISLDFDALDPSLMPSVGTPLPGGLSYRQVVDLLEAVFREKEVVGMDFVELSPNGQFHAEMTAAQLVYHAIGLKGLQAGWLSREVDHI.

Mn(2+) contacts are provided by histidine 105, aspartate 128, histidine 130, aspartate 132, aspartate 210, and aspartate 212.

The protein belongs to the arginase family. Mn(2+) serves as cofactor.

Its subcellular location is the cytoplasm. It catalyses the reaction N(1)-(3-aminopropyl)agmatine + H2O = urea + spermidine. It functions in the pathway amine and polyamine biosynthesis; spermidine biosynthesis. Its function is as follows. Involved in the biosynthesis of polyamines which are thought to support the growth of thermophilic microorganisms under high-temperature conditions. It seems that long-chain and branched-chain of polyamines effectively stabilize DNA and RNA, respectively. Catalyzes the decarboxylation of N1-(3-aminopropyl)agmatine to yield spermidine and urea. It cannot use agmatine as substrate. This is N(1)-aminopropylagmatine ureohydrolase from Thermus thermophilus (strain ATCC 27634 / DSM 579 / HB8).